We begin with the raw amino-acid sequence, 213 residues long: Receptor-binding cancer antigen expressed on SiSo cells (213 aa).

The Extracellular segment spans residues 1–7 (MAITQFR). A helical; Signal-anchor for type III membrane protein transmembrane segment spans residues 8–27 (LFKVCTCLATVFSFLKRLIC). Over 28 to 213 (RSGRGRKLSG…EQNKIGVKLS (186 aa)) the chain is Cytoplasmic. S36 carries the phosphoserine modification. T41 carries the post-translational modification Phosphothreonine. Y94 carries the phosphotyrosine modification. A coiled-coil region spans residues 163-211 (EDAAWQAEEVLRQQKIADREKRAAEQQRKKMEKEAQRLMKKEQNKIGVK). Positions 179–206 (ADREKRAAEQQRKKMEKEAQRLMKKEQN) are enriched in basic and acidic residues. Residues 179-213 (ADREKRAAEQQRKKMEKEAQRLMKKEQNKIGVKLS) form a disordered region.

In terms of assembly, homodimer. As to expression, widely expressed. Expressed in heart, brain, spleen, liver, kidney and testis.

It localises to the golgi apparatus membrane. In terms of biological role, may participate in suppression of cell proliferation and induces apoptotic cell death through activation of interleukin-1-beta converting enzyme (ICE)-like proteases. This Mus musculus (Mouse) protein is Receptor-binding cancer antigen expressed on SiSo cells (Ebag9).